The following is a 419-amino-acid chain: Effector protein BipC (419 aa).

Disordered stretches follow at residues 62-91 and 338-402; these read VAGSGAQRVELARPKPDAQTRATDRRTVSG and LQSG…AKSQ. Composition is skewed to basic and acidic residues over residues 71-91 and 380-392; these read ELARPKPDAQTRATDRRTVSG and TRDEAAHRSREAA.

It belongs to the SctB/SipC family.

The protein localises to the secreted. In Burkholderia mallei (strain NCTC 10247), this protein is Effector protein BipC (bipC).